A 492-amino-acid polypeptide reads, in one-letter code: Putative sucrose transport protein SUC6 (492 aa).

Positions 1 to 26 are disordered; sequence MSDLQANKDAAAVNRQSSSSSADLNG. The Cytoplasmic portion of the chain corresponds to 1-33; it reads MSDLQANKDAAAVNRQSSSSSADLNGPSPMRKM. The segment covering 14 to 23 has biased composition (polar residues); sequence NRQSSSSSAD. Ser-17 is modified (phosphoserine). A helical transmembrane segment spans residues 34–54; it reads ISVASIAAGIQFGWALQLSLL. The Extracellular portion of the chain corresponds to 55-68; it reads TPYVQLLGVPHKWS. A helical membrane pass occupies residues 69–89; that stretch reads SFIWLCGPVSGLLVQPSVGYF. Residues 90-101 lie on the Cytoplasmic side of the membrane; the sequence is SDRCKSRFGRRR. Residues 102–122 form a helical membrane-spanning segment; sequence PFIAMGALLVAVAVVLIGYAA. The Extracellular portion of the chain corresponds to 123-139; it reads DFGHSMGDKVDEPVKMR. A helical membrane pass occupies residues 140-160; the sequence is AVVIFALGFWILDVANNTLQG. At 161–181 the chain is on the cytoplasmic side; it reads PCRAFLGDLAAGDAKKTRTAN. Residues 182–202 traverse the membrane as a helical segment; sequence AFFSFFMAVGNVLGYAAGSYT. Over 203 to 224 the chain is Extracellular; sequence NLYKIFPFTMTKACDIYCANLK. A helical transmembrane segment spans residues 225 to 245; it reads SCFFLSITLLLVVTIIALWYV. Over 246–277 the chain is Cytoplasmic; it reads EDKQWSPKADSDNEKTPFFGEIFGAFKVMKRP. Residues 278–298 form a helical membrane-spanning segment; the sequence is MWMLLIVTALNWIAWFPFLLY. Residues 299-324 are Extracellular-facing; that stretch reads DTDWMGREVYGGDSKGDDKMKKLYNQ. The chain crosses the membrane as a helical span at residues 325 to 345; that stretch reads GIHVGGLGLMLNSIVLGFMSL. The Cytoplasmic segment spans residues 346-359; sequence GIEGISRKMGGAKR. A helical membrane pass occupies residues 360-380; the sequence is LWGAVNIILAVCLAMTVLVTK. Over 381–403 the chain is Extracellular; it reads KAEEHRRIAGPMALPTDGIRAGA. The chain crosses the membrane as a helical span at residues 404-424; it reads LTLFALLGIPLAITFSIPFAL. Over 425–446 the chain is Cytoplasmic; the sequence is ASIISSSSGAGQGLSLGVLNMT. The helical transmembrane segment at 447 to 467 threads the bilayer; that stretch reads IVIPQMVVSFGVGPIDALFGG. At 468–469 the chain is on the extracellular side; it reads GN. Residues 470-490 form a helical membrane-spanning segment; it reads LPGFVVGAIAAAISSVVAFSV. Over 491-492 the chain is Cytoplasmic; the sequence is LP.

Belongs to the glycoside-pentoside-hexuronide (GPH) cation symporter transporter (TC 2.A.2.4) family.

Its subcellular location is the cell membrane. Its pathway is glycan biosynthesis; sucrose metabolism. In terms of biological role, may be responsible for the transport of glucosides into the cell, with the concomitant uptake of protons (symport system). Does not seem to transport sucrose. The chain is Putative sucrose transport protein SUC6 from Arabidopsis thaliana (Mouse-ear cress).